A 70-amino-acid polypeptide reads, in one-letter code: Small ribosomal subunit protein eS17 (70 aa).

It belongs to the eukaryotic ribosomal protein eS17 family.

This Methanopyrus kandleri (strain AV19 / DSM 6324 / JCM 9639 / NBRC 100938) protein is Small ribosomal subunit protein eS17.